Here is a 197-residue protein sequence, read N- to C-terminus: Probable thymidylate kinase (197 aa).

Position 7-14 (G7–T14) interacts with ATP.

It belongs to the thymidylate kinase family.

It catalyses the reaction dTMP + ATP = dTDP + ADP. The polypeptide is Probable thymidylate kinase (Halorubrum lacusprofundi (strain ATCC 49239 / DSM 5036 / JCM 8891 / ACAM 34)).